Reading from the N-terminus, the 238-residue chain is Probable transcriptional regulatory protein SUB0364 (238 aa).

This sequence belongs to the TACO1 family. YeeN subfamily.

The protein resides in the cytoplasm. This is Probable transcriptional regulatory protein SUB0364 from Streptococcus uberis (strain ATCC BAA-854 / 0140J).